The chain runs to 227 residues: 2,3-bisphosphoglycerate-dependent phosphoglycerate mutase (227 aa).

Residues 8 to 15 (RHGKSVWN), 21 to 22 (TG), Arg-58, 110 to 113 (ERMY), Lys-121, 137 to 138 (RR), and 181 to 182 (GN) each bind substrate. Catalysis depends on His-9, which acts as the Tele-phosphohistidine intermediate. Glu-110 functions as the Proton donor/acceptor in the catalytic mechanism.

It belongs to the phosphoglycerate mutase family. BPG-dependent PGAM subfamily.

It catalyses the reaction (2R)-2-phosphoglycerate = (2R)-3-phosphoglycerate. It functions in the pathway carbohydrate degradation; glycolysis; pyruvate from D-glyceraldehyde 3-phosphate: step 3/5. Catalyzes the interconversion of 2-phosphoglycerate and 3-phosphoglycerate. The chain is 2,3-bisphosphoglycerate-dependent phosphoglycerate mutase from Chlamydia abortus (strain DSM 27085 / S26/3) (Chlamydophila abortus).